Reading from the N-terminus, the 419-residue chain is Queuine tRNA-ribosyltransferase accessory subunit 2 (419 aa).

Residues Cys326, Cys328, Cys331, and His357 each coordinate Zn(2+).

This sequence belongs to the queuine tRNA-ribosyltransferase family. QTRT2 subfamily. Heterodimer of a catalytic subunit and an accessory subunit. The cofactor is Zn(2+).

Its subcellular location is the cytoplasm. Non-catalytic subunit of the queuine tRNA-ribosyltransferase (TGT) that catalyzes the base-exchange of a guanine (G) residue with queuine (Q) at position 34 (anticodon wobble position) in tRNAs with GU(N) anticodons (tRNA-Asp, -Asn, -His and -Tyr), resulting in the hypermodified nucleoside queuosine (7-(((4,5-cis-dihydroxy-2-cyclopenten-1-yl)amino)methyl)-7-deazaguanosine). The polypeptide is Queuine tRNA-ribosyltransferase accessory subunit 2 (Drosophila grimshawi (Hawaiian fruit fly)).